The sequence spans 297 residues: Urease accessory protein UreD (297 aa).

The protein belongs to the UreD family. As to quaternary structure, ureD, UreF and UreG form a complex that acts as a GTP-hydrolysis-dependent molecular chaperone, activating the urease apoprotein by helping to assemble the nickel containing metallocenter of UreC. The UreE protein probably delivers the nickel.

The protein localises to the cytoplasm. Functionally, required for maturation of urease via the functional incorporation of the urease nickel metallocenter. The chain is Urease accessory protein UreD from Anaeromyxobacter sp. (strain Fw109-5).